We begin with the raw amino-acid sequence, 511 residues long: Lysine--tRNA ligase 2 (511 aa).

A disordered region spans residues 1–22 (MTMEINNTDPFEKMPLPDDSGL). Glu-421 and Glu-428 together coordinate Mg(2+).

This sequence belongs to the class-II aminoacyl-tRNA synthetase family. Homodimer. Mg(2+) serves as cofactor.

The protein resides in the cytoplasm. The catalysed reaction is tRNA(Lys) + L-lysine + ATP = L-lysyl-tRNA(Lys) + AMP + diphosphate. This Methanosarcina mazei (strain ATCC BAA-159 / DSM 3647 / Goe1 / Go1 / JCM 11833 / OCM 88) (Methanosarcina frisia) protein is Lysine--tRNA ligase 2.